Here is a 387-residue protein sequence, read N- to C-terminus: Chaperone protein DnaJ (387 aa).

The J domain occupies 5 to 70; the sequence is DYYEVLGVAK…QKRAAYDRFG (66 aa). The CR-type zinc finger occupies 140 to 218; that stretch reads GKTETIRLPT…CGGAGRVTRE (79 aa). Residues cysteine 153, cysteine 156, cysteine 170, cysteine 173, cysteine 192, cysteine 195, cysteine 206, and cysteine 209 each coordinate Zn(2+). 4 CXXCXGXG motif repeats span residues 153-160, 170-177, 192-199, and 206-213; these read CEVCAGSG, CPTCGGYG, CPNCQGRG, and CAACGGAG.

The protein belongs to the DnaJ family. Homodimer. Requires Zn(2+) as cofactor.

It is found in the cytoplasm. Its function is as follows. Participates actively in the response to hyperosmotic and heat shock by preventing the aggregation of stress-denatured proteins and by disaggregating proteins, also in an autonomous, DnaK-independent fashion. Unfolded proteins bind initially to DnaJ; upon interaction with the DnaJ-bound protein, DnaK hydrolyzes its bound ATP, resulting in the formation of a stable complex. GrpE releases ADP from DnaK; ATP binding to DnaK triggers the release of the substrate protein, thus completing the reaction cycle. Several rounds of ATP-dependent interactions between DnaJ, DnaK and GrpE are required for fully efficient folding. Also involved, together with DnaK and GrpE, in the DNA replication of plasmids through activation of initiation proteins. The chain is Chaperone protein DnaJ from Methylobacterium sp. (strain 4-46).